The primary structure comprises 568 residues: Proline--tRNA ligase (568 aa).

The protein belongs to the class-II aminoacyl-tRNA synthetase family. ProS type 1 subfamily. As to quaternary structure, homodimer.

The protein resides in the cytoplasm. The enzyme catalyses tRNA(Pro) + L-proline + ATP = L-prolyl-tRNA(Pro) + AMP + diphosphate. Functionally, catalyzes the attachment of proline to tRNA(Pro) in a two-step reaction: proline is first activated by ATP to form Pro-AMP and then transferred to the acceptor end of tRNA(Pro). As ProRS can inadvertently accommodate and process non-cognate amino acids such as alanine and cysteine, to avoid such errors it has two additional distinct editing activities against alanine. One activity is designated as 'pretransfer' editing and involves the tRNA(Pro)-independent hydrolysis of activated Ala-AMP. The other activity is designated 'posttransfer' editing and involves deacylation of mischarged Ala-tRNA(Pro). The misacylated Cys-tRNA(Pro) is not edited by ProRS. The chain is Proline--tRNA ligase from Listeria innocua serovar 6a (strain ATCC BAA-680 / CLIP 11262).